Consider the following 360-residue polypeptide: Aminomethyltransferase (360 aa).

It belongs to the GcvT family. In terms of assembly, the glycine cleavage system is composed of four proteins: P, T, L and H.

It carries out the reaction N(6)-[(R)-S(8)-aminomethyldihydrolipoyl]-L-lysyl-[protein] + (6S)-5,6,7,8-tetrahydrofolate = N(6)-[(R)-dihydrolipoyl]-L-lysyl-[protein] + (6R)-5,10-methylene-5,6,7,8-tetrahydrofolate + NH4(+). The glycine cleavage system catalyzes the degradation of glycine. The protein is Aminomethyltransferase of Pseudomonas putida (strain ATCC 47054 / DSM 6125 / CFBP 8728 / NCIMB 11950 / KT2440).